The sequence spans 610 residues: Glutamine--fructose-6-phosphate aminotransferase [isomerizing] (610 aa).

The active-site Nucleophile; for GATase activity is cysteine 2. Residues 2–218 enclose the Glutamine amidotransferase type-2 domain; it reads CGIVGAVAQR…EGDIAEITRR (217 aa). 2 consecutive SIS domains span residues 278–426 and 459–600; these read IVDS…VKGH and LAED…VDQP. Lysine 605 functions as the For Fru-6P isomerization activity in the catalytic mechanism.

In terms of assembly, homodimer.

It localises to the cytoplasm. It carries out the reaction D-fructose 6-phosphate + L-glutamine = D-glucosamine 6-phosphate + L-glutamate. In terms of biological role, catalyzes the first step in hexosamine metabolism, converting fructose-6P into glucosamine-6P using glutamine as a nitrogen source. This chain is Glutamine--fructose-6-phosphate aminotransferase [isomerizing], found in Haemophilus influenzae (strain ATCC 51907 / DSM 11121 / KW20 / Rd).